A 145-amino-acid chain; its full sequence is Oocyte zinc finger protein XlCOF8.4I (145 aa).

Positions 1-25 are disordered; sequence HKREADFCSKGNLTNPEISPVEHYP. The segment at 123–145 adopts a C2H2-type zinc-finger fold; it reads LSCSECGKCFSTYHVLARHQKTH.

The protein belongs to the krueppel C2H2-type zinc-finger protein family.

The protein resides in the nucleus. May be involved in transcriptional regulation. This is Oocyte zinc finger protein XlCOF8.4I from Xenopus laevis (African clawed frog).